Reading from the N-terminus, the 535-residue chain is T-complex protein 1 subunit zeta 1 (535 aa).

The protein belongs to the TCP-1 chaperonin family. In terms of assembly, heterooligomeric complex of about 850 to 900 kDa that forms two stacked rings, 12 to 16 nm in diameter.

The protein resides in the cytoplasm. In terms of biological role, molecular chaperone; assists the folding of proteins upon ATP hydrolysis. Known to play a role, in vitro, in the folding of actin and tubulin. This Arabidopsis thaliana (Mouse-ear cress) protein is T-complex protein 1 subunit zeta 1.